Here is a 605-residue protein sequence, read N- to C-terminus: Zinc metalloproteinase-disintegrin-like BfMP (605 aa).

The first 11 residues, 1 to 11 (MLVVFPYQGSS), serve as a signal peptide directing secretion. A propeptide spanning residues 12–179 (IILESGNVND…WESDEPFKNT (168 aa)) is cleaved from the precursor. N-linked (GlcNAc...) asparagine glycans are attached at residues Asn-178 and Asn-215. The region spanning 196-392 (KYIEFYVAVD…DRPQCILNKP (197 aa)) is the Peptidase M12B domain. 17 disulfides stabilise this stretch: Cys-307-Cys-387, Cys-347-Cys-371, Cys-350-Cys-355, Cys-403-Cys-432, Cys-414-Cys-427, Cys-416-Cys-422, Cys-426-Cys-449, Cys-440-Cys-446, Cys-445-Cys-471, Cys-458-Cys-478, Cys-465-Cys-497, Cys-490-Cys-502, Cys-509-Cys-559, Cys-524-Cys-567, Cys-537-Cys-547, Cys-554-Cys-593, and Cys-587-Cys-598. His-332 contacts Zn(2+). Glu-333 is an active-site residue. 2 residues coordinate Zn(2+): His-336 and His-342. Residues 400–486 (PAICGNYFVE…ECPTDIFRRN (87 aa)) enclose the Disintegrin domain. The D/ECD-tripeptide signature appears at 464 to 466 (DCD).

The protein belongs to the venom metalloproteinase (M12B) family. P-III subfamily. P-IIIa sub-subfamily. As to quaternary structure, monomer. The cofactor is Zn(2+). Expressed by the venom gland.

It is found in the secreted. Snake venom zinc metalloproteinase that inhibits platelet aggregation and degrades fibrinogen. The chain is Zinc metalloproteinase-disintegrin-like BfMP from Bungarus fasciatus (Banded krait).